The following is a 244-amino-acid chain: Cell division protein ZipA (244 aa).

The Periplasmic segment spans residues 1 to 4 (MSDM). A helical transmembrane segment spans residues 5–25 (AMIRIGILIAGLLLVAAIFLF). Residues 26–244 (GRPKKSPQGR…APPLTKSPRW (219 aa)) lie on the Cytoplasmic side of the membrane. Residues 30-91 (KSPQGRRVDK…GAGGNDVGKR (62 aa)) form a disordered region. Basic and acidic residues predominate over residues 35-50 (RRVDKDDTQPRERREP).

Belongs to the ZipA family. In terms of assembly, interacts with FtsZ via their C-terminal domains.

The protein resides in the cell inner membrane. Functionally, essential cell division protein that stabilizes the FtsZ protofilaments by cross-linking them and that serves as a cytoplasmic membrane anchor for the Z ring. Also required for the recruitment to the septal ring of downstream cell division proteins. This chain is Cell division protein ZipA, found in Xanthomonas campestris pv. campestris (strain ATCC 33913 / DSM 3586 / NCPPB 528 / LMG 568 / P 25).